A 191-amino-acid chain; its full sequence is A-type ATP synthase subunit E (191 aa).

The protein belongs to the V-ATPase E subunit family. Has multiple subunits with at least A(3), B(3), C, D, E, F, H, I and proteolipid K(x).

Its subcellular location is the cell membrane. Component of the A-type ATP synthase that produces ATP from ADP in the presence of a proton gradient across the membrane. The protein is A-type ATP synthase subunit E of Methanoregula boonei (strain DSM 21154 / JCM 14090 / 6A8).